The chain runs to 159 residues: Ribosomal RNA large subunit methyltransferase H (159 aa).

Residues Leu-76, Gly-108, and 127–132 (FSKMTF) each bind S-adenosyl-L-methionine.

The protein belongs to the RNA methyltransferase RlmH family. As to quaternary structure, homodimer.

It localises to the cytoplasm. It carries out the reaction pseudouridine(1915) in 23S rRNA + S-adenosyl-L-methionine = N(3)-methylpseudouridine(1915) in 23S rRNA + S-adenosyl-L-homocysteine + H(+). Specifically methylates the pseudouridine at position 1915 (m3Psi1915) in 23S rRNA. The protein is Ribosomal RNA large subunit methyltransferase H of Oceanobacillus iheyensis (strain DSM 14371 / CIP 107618 / JCM 11309 / KCTC 3954 / HTE831).